A 266-amino-acid polypeptide reads, in one-letter code: NADP-dependent mannitol dehydrogenase (266 aa).

The NADP(+) site is built by Thr-31, Ile-33, Asn-107, and Arg-140. The active-site Proton donor is the Ser-159. Residues Tyr-174, Lys-178, Ile-206, and Thr-208 each coordinate NADP(+). Tyr-174 functions as the Proton acceptor in the catalytic mechanism. Lys-178 functions as the Lowers pKa of active site Tyr in the catalytic mechanism.

Belongs to the short-chain dehydrogenases/reductases (SDR) family. Homotetramer.

It localises to the vacuole. The enzyme catalyses D-mannitol + NADP(+) = D-fructose + NADPH + H(+). The sequence is that of NADP-dependent mannitol dehydrogenase from Alternaria alternata (Alternaria rot fungus).